The chain runs to 216 residues: MSDTPHTAIDTVYPGNLFMVVAPSGAGKSTLVNALLAQDAAIRLSISHTTRAPRPGEQDGREYHFCTVDSFRAARDRGEFLEWAEVHGNYYATSRVWIEEQMAQGNDVLLEIDWQGAQQVHQRFSNAVEIFILPPSLTALEDRLKKRGQDEPNVIVRRLLAAGSEMSHASESDYVIINEVFDNALEELRNVVRATRLRFSSQKARHTELFIELGIH.

The region spanning 15 to 193 is the Guanylate kinase-like domain; that stretch reads GNLFMVVAPS…ALEELRNVVR (179 aa). ATP is bound at residue 22–29; that stretch reads APSGAGKS.

The protein belongs to the guanylate kinase family.

It is found in the cytoplasm. It catalyses the reaction GMP + ATP = GDP + ADP. In terms of biological role, essential for recycling GMP and indirectly, cGMP. The chain is Guanylate kinase from Cupriavidus pinatubonensis (strain JMP 134 / LMG 1197) (Cupriavidus necator (strain JMP 134)).